A 111-amino-acid chain; its full sequence is Universal stress protein B (111 aa).

A run of 2 helical transmembrane segments spans residues 1 to 21 (MISTFALFWALCIVCIINMAR) and 90 to 110 (FLLTTALCGLIVISLIAMMMW).

The protein belongs to the universal stress protein B family.

The protein resides in the cell inner membrane. The sequence is that of Universal stress protein B from Pectobacterium atrosepticum (strain SCRI 1043 / ATCC BAA-672) (Erwinia carotovora subsp. atroseptica).